A 256-amino-acid polypeptide reads, in one-letter code: Type III pantothenate kinase (256 aa).

7-14 contributes to the ATP binding site; sequence DVGNTRLK. Residues tyrosine 96 and 103-106 contribute to the substrate site; that span reads GADR. Residue aspartate 105 is the Proton acceptor of the active site. Threonine 133 provides a ligand contact to ATP. Threonine 183 serves as a coordination point for substrate.

The protein belongs to the type III pantothenate kinase family. In terms of assembly, homodimer. It depends on NH4(+) as a cofactor. K(+) is required as a cofactor.

The protein localises to the cytoplasm. The catalysed reaction is (R)-pantothenate + ATP = (R)-4'-phosphopantothenate + ADP + H(+). It functions in the pathway cofactor biosynthesis; coenzyme A biosynthesis; CoA from (R)-pantothenate: step 1/5. Catalyzes the phosphorylation of pantothenate (Pan), the first step in CoA biosynthesis. This Verminephrobacter eiseniae (strain EF01-2) protein is Type III pantothenate kinase.